The following is a 376-amino-acid chain: Endo-1,4-beta-xylanase A (376 aa).

An N-terminal signal peptide occupies residues 1 to 18; sequence MHLASSLFLLATLPFGFA. In terms of domain architecture, GH10 spans 55–355; it reads QRERAGLEDK…HPAYYGVVEA (301 aa). An N-linked (GlcNAc...) asparagine glycan is attached at asparagine 100. The active-site Proton donor is glutamate 170. Glutamate 277 functions as the Nucleophile in the catalytic mechanism. Asparagine 358 carries an N-linked (GlcNAc...) asparagine glycan.

Belongs to the glycosyl hydrolase 10 (cellulase F) family.

The protein localises to the secreted. The enzyme catalyses Endohydrolysis of (1-&gt;4)-beta-D-xylosidic linkages in xylans.. Its pathway is glycan degradation; xylan degradation. Partial inhibition of activity is detected in the presence of Ag(+), Cu2(+) and SDS. Like most fungal xylanases, activity is completely inhibited by Hg(2+) since Hg(2+) could interact with tryptophan residues and oxidize the indole ring. Beta-mercaptoethanol enhances the enzymatic activity by counteracting the oxidation effects of the S-S linkage between cysteine residues. In terms of biological role, endo-1,4-beta-xylanase involved in the hydrolysis of xylan, a major structural heterogeneous polysaccharide found in plant biomass representing the second most abundant polysaccharide in the biosphere, after cellulose. Is most active on birchwood xylan (defined as 100%), moderate on beechwood xylan (96.8%) and soluble wheat arabinoxylan (84.5%), and weak on insoluble wheat arabinoxylan (19.7%). Hydrolyzes substrates into a mixture of xylobiose and xylotriose, but no xylose. No activity was detected in the presence of barley beta-glucan, carboxymethyl cellulose-sodium (CMC-Na), and Avicel. Acts as an alkali-tolerant xylanase, exhibiting 68.8% of the activity at pH 9.0, and even 31.8% at pH 10.0. The sequence is that of Endo-1,4-beta-xylanase A from Humicola insolens (Soft-rot fungus).